We begin with the raw amino-acid sequence, 526 residues long: MFS-type transporter clz19 (526 aa).

The disordered stretch occupies residues 1 to 49 (MNVDTTSPQAPLAGVESKQDGASNEATAKAESTTHDQNESSSFDERPVH). The span at 32 to 49 (STTHDQNESSSFDERPVH) shows a compositional bias: basic and acidic residues. The N-linked (GlcNAc...) asparagine glycan is linked to asparagine 38. The helical transmembrane segment at 59-79 (ALLAVASFAAAISPASTTTYY) threads the bilayer. N-linked (GlcNAc...) asparagine glycosylation is present at asparagine 97. A run of 3 helical transmembrane segments spans residues 126 to 143 (VYLV…GLAL), 186 to 206 (AYLT…GGLL), and 214 to 234 (AIFW…LTFF). Asparagine 238 and asparagine 253 each carry an N-linked (GlcNAc...) asparagine glycan. A run of 6 helical transmembrane segments spans residues 294–314 (FIVC…ISIF), 322–342 (YGYS…GSIL), 384–404 (LTVS…YGWL), 411–431 (VASV…VLIA), 446–466 (ALGA…VAAV), and 473–493 (IGIG…LPAL).

The protein belongs to the major facilitator superfamily.

The protein resides in the membrane. Its function is as follows. MFS-type transporter; part of the gene cluster that mediates the biosynthesis of squalestatin S1 (SQS1, also known as zaragozic acid A), a heavily oxidized fungal polyketide that offers potent cholesterol lowering activity by targeting squalene synthase (SS). This chain is MFS-type transporter clz19, found in Cochliobolus lunatus (Filamentous fungus).